A 124-amino-acid polypeptide reads, in one-letter code: Membrane magnesium transporter 2 (124 aa).

Position 1 (Met-1) is a topological domain, cytoplasmic. The chain crosses the membrane as a helical span at residues 2-22 (VAWLWKVLVGVGLSALAHAAF). Over 23-44 (SAAQHRSHTRLAEMKYEPLPTD) the chain is Lumenal. The helical transmembrane segment at 45-65 (IVLQTLLAFALTCYGVVHTAG) threads the bilayer. At 66–124 (DFRDRDATSELKNVTFDTLRNRPSFYVFQHSGSSLLQPSDTTRSSNLNVPSSDDIRLKF) the chain is on the cytoplasmic side.

This sequence belongs to the membrane magnesium transporter (TC 1.A.67) family.

The protein localises to the golgi apparatus membrane. The protein resides in the early endosome membrane. Functionally, mediates Mg(2+) transport. The sequence is that of Membrane magnesium transporter 2 from Rattus norvegicus (Rat).